The chain runs to 351 residues: MYSLARPFLFSLDAERAHALALRSIDTAYRTGTTALLARRPVPLPTPAFGLMFPNPVGLGAGLDKNGEHIDALFALGFGFVEIGTVTPRAQEGNPKPRMFRLPEYQAVINRMGFNNLGVDALVANVQRARRTGGLLGINIGKNKDTSNEEATSDYRYCMERVYPLADYITVNISSPNTAGLRELQEEQSLRRLISDLRETQEALSAQHGKRVPMLVKVAPDLNDRDIDAAARVLADLAVDGVIATNTTVTRTLVANHPLAAEAGGLSGAPLLGQSTLVLRRLRARLPESIPLIGVGGINSGADAVAKMAAGASLVQCYSGLVYRGPQLIGECVNAIRRRREAPSGGAVSPL.

FMN contacts are provided by residues 61 to 65 and Thr85; that span reads AGLDK. Lys65 lines the substrate pocket. 110-114 contributes to the substrate binding site; it reads NRMGF. Residues Asn139 and Asn172 each contribute to the FMN site. Asn172 is a substrate binding site. Catalysis depends on Ser175, which acts as the Nucleophile. Residue Asn177 participates in substrate binding. FMN-binding residues include Lys217 and Thr245. Residue 246-247 coordinates substrate; sequence NT. Residues Gly268, Gly297, and 318–319 each bind FMN; that span reads YS.

This sequence belongs to the dihydroorotate dehydrogenase family. Type 2 subfamily. Monomer. The cofactor is FMN.

The protein resides in the cell membrane. It carries out the reaction (S)-dihydroorotate + a quinone = orotate + a quinol. It functions in the pathway pyrimidine metabolism; UMP biosynthesis via de novo pathway; orotate from (S)-dihydroorotate (quinone route): step 1/1. Catalyzes the conversion of dihydroorotate to orotate with quinone as electron acceptor. This is Dihydroorotate dehydrogenase (quinone) from Xanthomonas axonopodis pv. citri (strain 306).